The following is a 428-amino-acid chain: Nocturnin (428 aa).

Residues 1–72 (MYQSPRRLCS…PMGNGTSRLY (72 aa)) constitute a mitochondrion transit peptide. Residues 21–66 (RRTLVPGPRRTLAPPVLGSRPASPQLQAAASGAARSRPRTVSPMGN) are disordered. Over residues 39–55 (SRPASPQLQAAASGAAR) the composition is skewed to low complexity. A Mg(2+)-binding site is contributed by glutamate 192. Substrate is bound by residues glutamate 192, 216 to 218 (KPW), asparagine 260, 283 to 286 (HLKA), and 321 to 323 (DFN). Positions 340-350 (NLNSAYKLLSP) are interaction with PPARG. Histidine 411 is a substrate binding site.

The protein belongs to the CCR4/nocturin family. In terms of assembly, interacts with PPARG. Requires Mg(2+) as cofactor.

Its subcellular location is the cytoplasm. The protein localises to the nucleus. The protein resides in the perinuclear region. It is found in the mitochondrion. The catalysed reaction is NADP(+) + H2O = phosphate + NAD(+). It catalyses the reaction NADPH + H2O = phosphate + NADH. In terms of biological role, phosphatase which catalyzes the conversion of NADP(+) to NAD(+) and of NADPH to NADH. Shows a small preference for NADPH over NADP(+). Represses translation and promotes degradation of target mRNA molecules. Plays an important role in post-transcriptional regulation of metabolic genes under circadian control. Exerts a rhythmic post-transcriptional control of genes necessary for metabolic functions including nutrient absorption, glucose/insulin sensitivity, lipid metabolism, adipogenesis, inflammation and osteogenesis. Plays an important role in favoring adipogenesis over osteoblastogenesis and acts as a key regulator of the adipogenesis/osteogenesis balance. Promotes adipogenesis by facilitating PPARG nuclear translocation which activates its transcriptional activity. Regulates circadian expression of NOS2 in the liver and negatively regulates the circadian expression of IGF1 in the bone. Critical for proper development of early embryos. In Rattus norvegicus (Rat), this protein is Nocturnin.